Here is a 315-residue protein sequence, read N- to C-terminus: tRNA-dihydrouridine(16) synthase (315 aa).

FMN-binding positions include 7–9 (PME) and Q68. C98 functions as the Proton donor in the catalytic mechanism. FMN contacts are provided by residues K139, 199-201 (NGE), and 223-224 (GR).

This sequence belongs to the Dus family. DusC subfamily. The cofactor is FMN.

The enzyme catalyses 5,6-dihydrouridine(16) in tRNA + NADP(+) = uridine(16) in tRNA + NADPH + H(+). It carries out the reaction 5,6-dihydrouridine(16) in tRNA + NAD(+) = uridine(16) in tRNA + NADH + H(+). Functionally, catalyzes the synthesis of 5,6-dihydrouridine (D), a modified base found in the D-loop of most tRNAs, via the reduction of the C5-C6 double bond in target uridines. Specifically modifies U16 in tRNAs. This Shewanella oneidensis (strain ATCC 700550 / JCM 31522 / CIP 106686 / LMG 19005 / NCIMB 14063 / MR-1) protein is tRNA-dihydrouridine(16) synthase.